A 194-amino-acid polypeptide reads, in one-letter code: Type II secretion system protein H (194 aa).

A propeptide spans Met-1–Gly-6 (leader sequence). The residue at position 7 (Phe-7) is an N-methylphenylalanine. Residues Ile-12 to Val-32 form a helical membrane-spanning segment.

The protein belongs to the GSP H family. In terms of assembly, type II secretion is composed of four main components: the outer membrane complex, the inner membrane complex, the cytoplasmic secretion ATPase and the periplasm-spanning pseudopilus. Interacts with core component EpsG. In terms of processing, cleaved by prepilin peptidase. Post-translationally, methylated by prepilin peptidase at the amino group of the N-terminal phenylalanine once the leader sequence is cleaved by prepilin peptidase.

The protein localises to the cell inner membrane. Component of the type II secretion system required for the energy-dependent secretion of extracellular factors such as proteases and toxins from the periplasm. Part of the pseudopilus tip complex that is critical for the recognition and binding of secretion substrates. The sequence is that of Type II secretion system protein H (epsH) from Vibrio cholerae serotype O1 (strain ATCC 39315 / El Tor Inaba N16961).